The sequence spans 462 residues: MTLKLYDTMAREKRDFVPADPGRVTMYVCGPTVYNHAHIGNFRPVVVFDVLFRLLRHVYGEDAVVYARNVTDVDDKINAKATAEGVEIKVITDRYLAAYHEDAAALLTLPPSLEPKATEHMGPIIEMIGELVANGSAYAAEGHVLFDTQAFPDYGQLSGRDLDDMIAGARVEVAPYKRHPADFVLWKPSKENEPEWDSPWGAGRPGWHIECSAMIDKTLGQTIDIHGGGIDLAFPHHENELAQSRCAHGAPVLANYWLHNGFLDMAGEKMSKSLGNVIIPHELLKTTPGEAIRWALLSGHYRQPLDWTPELIEQSKKALDRLYGALRRAKTVEAGESEPSDEVMAALSDDLNTPLAVSGFFELSSAIERAVTAGDELAITANKGRLLASAGLLGFLQADPDSWFEGDADDDLKAKVEDLLARRIAARTAKDWTAADAIRAEIDALGVVVMDGPAGATWRMKD.

A Zn(2+)-binding site is contributed by C29. A 'HIGH' region motif is present at residues P31–N41. Positions 211, 236, and 240 each coordinate Zn(2+). The 'KMSKS' region motif lies at K269–S273. K272 lines the ATP pocket.

Belongs to the class-I aminoacyl-tRNA synthetase family. As to quaternary structure, monomer. Zn(2+) is required as a cofactor.

The protein localises to the cytoplasm. It catalyses the reaction tRNA(Cys) + L-cysteine + ATP = L-cysteinyl-tRNA(Cys) + AMP + diphosphate. This Caulobacter sp. (strain K31) protein is Cysteine--tRNA ligase.